A 282-amino-acid chain; its full sequence is Uracil-DNA glycosylase (282 aa).

Residues 15–40 are disordered; that stretch reads SAASKRKSASNTENIPEKVPAGNENQ. Residue D123 is the Proton acceptor of the active site.

The protein belongs to the uracil-DNA glycosylase (UDG) superfamily. UNG family.

The protein resides in the mitochondrion. It localises to the nucleus. It catalyses the reaction Hydrolyzes single-stranded DNA or mismatched double-stranded DNA and polynucleotides, releasing free uracil.. With respect to regulation, inhibited by UGI, a B.subtilis bacteriophage PBS2 peptide inhibitor. Functionally, excises uracil residues from the DNA which can arise as a result of misincorporation of dUMP residues by DNA polymerase or due to deamination of cytosine. The chain is Uracil-DNA glycosylase from Caenorhabditis elegans.